A 1948-amino-acid chain; its full sequence is Chromodomain-helicase-DNA-binding protein 5 (1948 aa).

3 disordered regions span residues 1–136 (MRGP…SGQL), 228–268 (SPQQ…GRGK), and 281–336 (SKRK…GDGY). Acidic residues-rich tracts occupy residues 17–37 (EEME…EGFE) and 71–89 (NDEL…ESEG). Composition is skewed to basic residues over residues 95–114 (TKKK…KRKK) and 250–268 (GVRK…GRGK). The segment covering 289-299 (SEEDEPEDSDL) has biased composition (acidic residues). Residues 319-328 (KKNKRRRKKK) show a composition bias toward basic residues. 2 PHD-type zinc fingers span residues 341 to 388 (QDYC…CEKE) and 414 to 461 (MEFC…CTCP). Residues 341–651 (QDYCEVCQQG…HRELMLGEDA (311 aa)) form a histone-binding region. One can recognise a Chromo 1 domain in the interval 495 to 552 (MPPPRPLEGIPEREFFVKWAGLSYWHCSWVKELQLELYHTVMYRNYQRKNDMDEPPPF). The tract at residues 547–569 (DEPPPFDYGSGDEDGKSEKRKNK) is disordered. Over residues 559 to 569 (EDGKSEKRKNK) the composition is skewed to basic and acidic residues. Residues 590-651 (MMVHRILNHS…HRELMLGEDA (62 aa)) form the Chromo 2 domain. A Helicase ATP-binding domain is found at 710 to 894 (RFSWAQGTDT…FHLLNFLTPE (185 aa)). 723–730 (DEMGLGKT) contacts ATP. A DEAH box motif is present at residues 845–848 (DEAH). Residues 1026 to 1191 (LLQKMLKKLR…MTKQELDDIL (166 aa)) enclose the Helicase C-terminal domain. 4 disordered regions span residues 1206-1250 (MMSQ…VEDS), 1349-1409 (YNDA…LPPL), 1521-1566 (KYST…LPDK), and 1595-1692 (TALD…EDKN). Acidic residues-rich tracts occupy residues 1353-1364 (SQEDQEWQDELS) and 1374-1383 (SEDEDEDFEE). Gln-1388 is modified (N5-methylglutamine). The span at 1547–1561 (TPVPASPAQLPPAPL) shows a compositional bias: pro residues. Residue Ser-1552 is modified to Phosphoserine. Composition is skewed to basic and acidic residues over residues 1598 to 1625 (DRVE…EVEK), 1633 to 1650 (PLKE…DKLE), and 1657 to 1672 (NDFR…KEPT).

It belongs to the SNF2/RAD54 helicase family. In terms of assembly, component of the nucleosome remodeling and deacetylase (NuRD) repressor complex, composed of core proteins MTA1, MTA2, MTA3, RBBP4, RBBP7, HDAC1, HDAC2, MBD2, MBD3, and peripherally associated proteins CDK2AP1, CDK2AP2, GATAD2A, GATAD2B, CHD3, CHD4 and CHD5. The exact stoichiometry of the NuRD complex is unknown, and some subunits such as MBD2 and MBD3, GATAD2A and GATAD2B, and CHD3, CHD4 and CHD5 define mutually exclusive NuRD complexes. Interacts with HDAC2. Post-translationally, methylated at Gln-1388 by N6AMT1. In terms of tissue distribution, expressed in brain regions enriched in neurons and not in regions rich in glial cells (at protein level).

It is found in the nucleus. The protein resides in the chromosome. It catalyses the reaction ATP + H2O = ADP + phosphate + H(+). Its function is as follows. ATP-dependent chromatin-remodeling factor that binds DNA through histones and regulates gene transcription. May specifically recognize and bind trimethylated 'Lys-27' (H3K27me3) and non-methylated 'Lys-4' of histone H3. Acts as a component of the histone deacetylase NuRD complex which participates in the remodeling of chromatin. Plays a role in the development of the nervous system by activating the expression of genes promoting neuron terminal differentiation. In parallel, it may also positively regulate the trimethylation of histone H3 at 'Lys-27' thereby specifically repressing genes that promote the differentiation into non-neuronal cell lineages. Regulates the expression of genes involved in cell proliferation and differentiation. Downstream activated genes may include CDKN2A that positively regulates the p53/TP53 pathway, which in turn, prevents cell proliferation. In spermatogenesis, it probably regulates histone hyperacetylation and the replacement of histones by transition proteins in chromatin, a crucial step in the condensation of spermatid chromatin and the production of functional spermatozoa. The polypeptide is Chromodomain-helicase-DNA-binding protein 5 (Chd5) (Rattus norvegicus (Rat)).